The following is a 360-amino-acid chain: UDP-N-acetylglucosamine--N-acetylmuramyl-(pentapeptide) pyrophosphoryl-undecaprenol N-acetylglucosamine transferase (360 aa).

UDP-N-acetyl-alpha-D-glucosamine-binding positions include 11–13 (TGG), Asn120, Arg161, Ser188, and Gln282.

This sequence belongs to the glycosyltransferase 28 family. MurG subfamily.

The protein resides in the cell inner membrane. The enzyme catalyses di-trans,octa-cis-undecaprenyl diphospho-N-acetyl-alpha-D-muramoyl-L-alanyl-D-glutamyl-meso-2,6-diaminopimeloyl-D-alanyl-D-alanine + UDP-N-acetyl-alpha-D-glucosamine = di-trans,octa-cis-undecaprenyl diphospho-[N-acetyl-alpha-D-glucosaminyl-(1-&gt;4)]-N-acetyl-alpha-D-muramoyl-L-alanyl-D-glutamyl-meso-2,6-diaminopimeloyl-D-alanyl-D-alanine + UDP + H(+). Its pathway is cell wall biogenesis; peptidoglycan biosynthesis. In terms of biological role, cell wall formation. Catalyzes the transfer of a GlcNAc subunit on undecaprenyl-pyrophosphoryl-MurNAc-pentapeptide (lipid intermediate I) to form undecaprenyl-pyrophosphoryl-MurNAc-(pentapeptide)GlcNAc (lipid intermediate II). The sequence is that of UDP-N-acetylglucosamine--N-acetylmuramyl-(pentapeptide) pyrophosphoryl-undecaprenol N-acetylglucosamine transferase from Synechococcus sp. (strain RCC307).